We begin with the raw amino-acid sequence, 516 residues long: Calcitonin receptor (516 aa).

Positions 1–24 (MRFLLLNRFTLLLLLLVSPTPVLQ) are cleaved as a signal peptide. The Extracellular portion of the chain corresponds to 25-146 (APTNLTDSGL…FTPDKLHNAY (122 aa)). N-linked (GlcNAc...) asparagine glycans are attached at residues N28, N73, N125, and N130. Cystine bridges form between C55–C81, C72–C112, and C95–C134. The chain crosses the membrane as a helical span at residues 147–169 (VLYYLALVGHSMSIAALIASMGI). Topologically, residues 170 to 181 (FLFFKNLSCQRV) are cytoplasmic. Residues 182-202 (TLHKNMFLTYILNSIIIIIHL) form a helical membrane-spanning segment. Over 203-256 (VEVVPNGDLVRRDPMHIFHHNTYMWTMQWELSPPLPLSAHEGKMDPHDSEVISC) the chain is Extracellular. A disulfide bridge links C256 with C326. A helical transmembrane segment spans residues 257-279 (KILHFFHQYMMACNYFWMLCEGI). Over 280-296 (YLHTLIVMAVFTEDQRL) the chain is Cytoplasmic. A helical transmembrane segment spans residues 297-317 (RWYYLLGWGFPIVPTIIHAIT). At 318-333 (RAVYYNDNCWLSTETH) the chain is on the extracellular side. The helical transmembrane segment at 334 to 357 (LLYIIHGPVMAALVVNFFFLLNIV) threads the bilayer. Residues 358–377 (RVLVTKMRQTHEAEAYMYLK) are Cytoplasmic-facing. A helical membrane pass occupies residues 378–396 (AVKATMVLVPLLGIQFVVF). Topologically, residues 397–404 (PWRPSNKV) are extracellular. A helical transmembrane segment spans residues 405–431 (LGKIYDYLMHSLIHFQGFFVATIYCFC). The Cytoplasmic portion of the chain corresponds to 432–516 (NHEVQVTLKR…MNVIQQDSSA (85 aa)). Residues 489 to 516 (RNPPVSNNEGEEGTEMIPMNVIQQDSSA) are disordered.

The protein belongs to the G-protein coupled receptor 2 family. Heterodimer of CALCR and RAMP1, RAMP2 or RAMP3; the receptor complexes function as AMYR1, AMYR2 and AMYR3 receptors, respectively, and respond to amylin/IAPP, calcitonin/CT and CGRP1 ligands. Interacts with GPRASP2.

The protein localises to the cell membrane. Functionally, g protein-coupled receptor activated by ligand peptides amylin (IAPP), calcitonin (CT/CALCA) and calcitonin gene-related peptide type 1 (CGRP1/CALCA). CALCR interacts with receptor-activity-modifying proteins RAMP1, 2 and 3 to form receptor complexes AMYR1, 2 and 3, respectively. IAPP, CT and CGRP1 activate CALCR and AMYRs with distinct modes of receptor activation resulting in specific phenotypes. Ligand binding causes a conformation change that triggers signaling via guanine nucleotide-binding proteins (G proteins) and modulates the activity of downstream effectors. Activates cAMP-dependent pathway. The protein is Calcitonin receptor of Rattus norvegicus (Rat).